Consider the following 123-residue polypeptide: Small ribosomal subunit protein uS13 (123 aa).

Residues G95 to K123 form a disordered region.

This sequence belongs to the universal ribosomal protein uS13 family. Part of the 30S ribosomal subunit. Forms a loose heterodimer with protein S19. Forms two bridges to the 50S subunit in the 70S ribosome.

Functionally, located at the top of the head of the 30S subunit, it contacts several helices of the 16S rRNA. In the 70S ribosome it contacts the 23S rRNA (bridge B1a) and protein L5 of the 50S subunit (bridge B1b), connecting the 2 subunits; these bridges are implicated in subunit movement. Contacts the tRNAs in the A and P-sites. This is Small ribosomal subunit protein uS13 from Clostridium novyi (strain NT).